A 362-amino-acid chain; its full sequence is UDP-N-acetylglucosamine--N-acetylmuramyl-(pentapeptide) pyrophosphoryl-undecaprenol N-acetylglucosamine transferase (362 aa).

Residues 15-17 (TGG), asparagine 127, arginine 165, serine 191, isoleucine 247, 266-271 (ALTVSE), and glutamine 292 contribute to the UDP-N-acetyl-alpha-D-glucosamine site.

The protein belongs to the glycosyltransferase 28 family. MurG subfamily.

The protein localises to the cell inner membrane. It catalyses the reaction di-trans,octa-cis-undecaprenyl diphospho-N-acetyl-alpha-D-muramoyl-L-alanyl-D-glutamyl-meso-2,6-diaminopimeloyl-D-alanyl-D-alanine + UDP-N-acetyl-alpha-D-glucosamine = di-trans,octa-cis-undecaprenyl diphospho-[N-acetyl-alpha-D-glucosaminyl-(1-&gt;4)]-N-acetyl-alpha-D-muramoyl-L-alanyl-D-glutamyl-meso-2,6-diaminopimeloyl-D-alanyl-D-alanine + UDP + H(+). It participates in cell wall biogenesis; peptidoglycan biosynthesis. Its function is as follows. Cell wall formation. Catalyzes the transfer of a GlcNAc subunit on undecaprenyl-pyrophosphoryl-MurNAc-pentapeptide (lipid intermediate I) to form undecaprenyl-pyrophosphoryl-MurNAc-(pentapeptide)GlcNAc (lipid intermediate II). This Shewanella sp. (strain ANA-3) protein is UDP-N-acetylglucosamine--N-acetylmuramyl-(pentapeptide) pyrophosphoryl-undecaprenol N-acetylglucosamine transferase.